The primary structure comprises 158 residues: Succinate dehydrogenase [ubiquinone] cytochrome b small subunit B, mitochondrial (158 aa).

The transit peptide at 1-29 (MAALVRISSLCHRGVSPLLFRPSSLIRPL) directs the protein to the mitochondrion. Residues 30 to 62 (AVQQKDHDCSYLISARIHATPSNYAGSGSKAAT) lie on the Mitochondrial matrix side of the membrane. The helical transmembrane segment at 63 to 84 (MHWTGERILSIALLSLAPVAYF) threads the bilayer. At 85 to 89 (CPSPA) the chain is on the mitochondrial intermembrane side. Residues 90-110 (VDYSLAAALTLHGHWGLGQVV) traverse the membrane as a helical segment. Residue His-101 coordinates heme b. Over 111 to 119 (TDYVHGDAK) the chain is Mitochondrial matrix. An a ubiquinone-binding site is contributed by Tyr-113. Residues 120–141 (IKMANAGLFVLSTVTFAGLCYF) traverse the membrane as a helical segment. Over 142 to 158 (NYHDVGICKAVALLWSK) the chain is Mitochondrial intermembrane.

It belongs to the CybS family. As to quaternary structure, component of complex II composed of four subunits: the flavoprotein (FP) SDHA, iron-sulfur protein (IP) SDHB, and a cytochrome b560 composed of SDHC and SDHD.

It is found in the mitochondrion inner membrane. It participates in carbohydrate metabolism; tricarboxylic acid cycle. In terms of biological role, membrane-anchoring subunit of succinate dehydrogenase (SDH) that is involved in complex II of the mitochondrial electron transport chain and is responsible for transferring electrons from succinate to ubiquinone (coenzyme Q). SDH also oxidizes malate to the non-canonical enol form of oxaloacetate, enol-oxaloacetate. Enol-oxaloacetate, which is a potent inhibitor of the succinate dehydrogenase activity, is further isomerized into keto-oxaloacetate. The protein is Succinate dehydrogenase [ubiquinone] cytochrome b small subunit B, mitochondrial (sdhdb) of Danio rerio (Zebrafish).